Reading from the N-terminus, the 433-residue chain is E3 ubiquitin-protein ligase RGLG5 (433 aa).

The interval 1-61 (MGGSSSKESP…SYNSGRQTPK (61 aa)) is disordered. A lipid anchor (N-myristoyl glycine) is attached at Gly2. Low complexity predominate over residues 22–39 (SVSGSSSYSSAWDQSSYY). Residues 40–61 (QTPNHPSASPVSSYNSGRQTPK) show a composition bias toward polar residues. The VWFA domain occupies 93 to 313 (NLIVGIDVTK…KEAEFALSAL (221 aa)). The interval 340–383 (IALPPPTYATQSMRNSPRTSRSTSFQNKPYDNGVSSTPPSTTHN) is disordered. Positions 347-383 (YATQSMRNSPRTSRSTSFQNKPYDNGVSSTPPSTTHN) are enriched in polar residues. The RING-type zinc finger occupies 390–423 (CPVCLVSAKNMAFNCGHQTCAGCGEDLHVCPICR).

Interacts with PP2CA. Post-translationally, N-myristoylated.

It is found in the cell membrane. The enzyme catalyses S-ubiquitinyl-[E2 ubiquitin-conjugating enzyme]-L-cysteine + [acceptor protein]-L-lysine = [E2 ubiquitin-conjugating enzyme]-L-cysteine + N(6)-ubiquitinyl-[acceptor protein]-L-lysine.. Together with RGLG1, mediates the ubiquitination and subsequent proteasomal degradation of the target protein PP2CA. Functions as a positive regulator of abscisic acid (ABA) signaling through ABA-dependent degradation of PP2CA, a major inhibitor of ABA signaling. This is E3 ubiquitin-protein ligase RGLG5 from Arabidopsis thaliana (Mouse-ear cress).